We begin with the raw amino-acid sequence, 143 residues long: Nucleoside diphosphate kinase (143 aa).

Residues lysine 11, phenylalanine 59, arginine 87, threonine 93, arginine 104, and asparagine 114 each contribute to the ATP site. The Pros-phosphohistidine intermediate role is filled by histidine 117.

Belongs to the NDK family. As to quaternary structure, homotetramer. The cofactor is Mg(2+).

It localises to the cytoplasm. The catalysed reaction is a 2'-deoxyribonucleoside 5'-diphosphate + ATP = a 2'-deoxyribonucleoside 5'-triphosphate + ADP. It carries out the reaction a ribonucleoside 5'-diphosphate + ATP = a ribonucleoside 5'-triphosphate + ADP. Functionally, major role in the synthesis of nucleoside triphosphates other than ATP. The ATP gamma phosphate is transferred to the NDP beta phosphate via a ping-pong mechanism, using a phosphorylated active-site intermediate. In Shewanella woodyi (strain ATCC 51908 / MS32), this protein is Nucleoside diphosphate kinase.